Consider the following 1312-residue polypeptide: Probable histone-lysine N-methyltransferase lin-59 (1312 aa).

Polar residues-rich tracts occupy residues 1 to 11 (MHGAGEQQQRY) and 25 to 36 (STSSHQYQQQGA). Disordered regions lie at residues 1-41 (MHGA…QMHQ), 54-81 (TTTS…RQQG), 154-223 (QPSG…KPVD), 312-435 (EESK…PPPV), and 524-556 (KDNI…EPSE). Low complexity predominate over residues 54–68 (TTTSAAASTSSSGGS). Positions 69 to 78 (NSSGGSGGHR) are enriched in gly residues. A compositionally biased stretch (low complexity) spans 160-176 (PMSSNAPATTSSATPDS). Residues 200–210 (DHDDEEDDDGP) show a composition bias toward acidic residues. Basic and acidic residues predominate over residues 312-321 (EESKKKKDME). Polar residues predominate over residues 344 to 367 (ATRSTNSPDVTTSNLPEEPSTSTM). Residues 371-382 (KENEDVEKVEGK) are compositionally biased toward basic and acidic residues. Residues 383 to 394 (RRGRKPKKRRGF) are compositionally biased toward basic residues. Basic and acidic residues-rich tracts occupy residues 395–419 (HKES…DHLP) and 524–535 (KDNIKKEVKEES). The region spanning 590-635 (APSLTCGCTKGACTSDMDCLNRALRVQCSSDCSVPYCSNRRFWKED) is the AWS domain. An SET domain is found at 638–750 (NKLCVSNGPR…PNAEITVDKS (113 aa)). Positions 913–934 (DNAPRARALSTSCPSPVPSKRG) are disordered. The segment at 967 to 1027 (AVRCICGALD…EYICDFCTNK (61 aa)) adopts a PHD-type zinc-finger fold. Positions 1100-1223 (NKYRFPKAAT…KTQRVFEKVP (124 aa)) constitute a BAH domain. Residues 1248–1295 (RDFRPYDPSNPSPKPPKTSSIPSTSSIDPPQSSSDGLPEVDTKKLSKR) are disordered. Low complexity predominate over residues 1264–1281 (KTSSIPSTSSIDPPQSSS).

It belongs to the class V-like SAM-binding methyltransferase superfamily. Histone-lysine methyltransferase family. SET2 subfamily. As to expression, widely expressed throughout embryonic development and into adulthood.

The protein resides in the nucleus. It carries out the reaction L-lysyl-[histone] + S-adenosyl-L-methionine = N(6)-methyl-L-lysyl-[histone] + S-adenosyl-L-homocysteine + H(+). Functionally, probable histone methyltransferase. Essential protein required to maintain expression of homeotic genes egl-5 and mab-5. May play an analogous role to the trithorax Group (trxG) proteins. TrxG proteins form multiprotein complexes that are required to maintain the transcriptionally active state of homeotic genes throughout development. May act via a modification of chromatin. The protein is Probable histone-lysine N-methyltransferase lin-59 (lin-59) of Caenorhabditis elegans.